We begin with the raw amino-acid sequence, 205 residues long: Guanylate kinase (205 aa).

The region spanning 3-181 is the Guanylate kinase-like domain; it reads GSLYIISAPS…ALSELHSIFL (179 aa). 10 to 17 contributes to the ATP binding site; the sequence is APSGAGKT.

It belongs to the guanylate kinase family.

It localises to the cytoplasm. It carries out the reaction GMP + ATP = GDP + ADP. Functionally, essential for recycling GMP and indirectly, cGMP. The polypeptide is Guanylate kinase (Hydrogenovibrio crunogenus (strain DSM 25203 / XCL-2) (Thiomicrospira crunogena)).